The sequence spans 1697 residues: UDP-sugar-dependent glycosyltransferase 52 (1697 aa).

Disordered stretches follow at residues 20–40 (HSDS…NYEN) and 142–166 (STDL…LMIP). In terms of domain architecture, PH spans 234–332 (DYVLENYLYK…WYHEINRMQK (99 aa)). Disordered regions lie at residues 573–645 (FRSK…TTHE) and 707–756 (PLDK…KQSQ). Composition is skewed to low complexity over residues 584–628 (QNSQ…SSSA) and 711–722 (QQQQQQQQQQQQ). 2 consecutive GRAM domains span residues 658–793 (STFH…TKER) and 881–948 (IKIK…KKYS). Acidic residues predominate over residues 739–749 (TDSDTDSESDF). Disordered stretches follow at residues 1011-1047 (SPSI…IHST), 1062-1085 (DGEN…SNSF), 1110-1130 (SAQQ…STTT), and 1466-1488 (EHNN…SNKS). Low complexity-rich tracts occupy residues 1026–1047 (PPSS…IHST), 1065–1084 (NNSN…KSNS), 1112–1130 (QQQQ…STTT), and 1469–1479 (NNNNNNNNNNN). The segment at 1622-1685 (SSAPNSCMGC…VCDKCFNDLQ (64 aa)) adopts an FYVE-type zinc-finger fold. Residues C1628, C1631, C1647, C1650, C1655, C1658, C1677, and C1680 each contribute to the Zn(2+) site.

This sequence belongs to the glycosyltransferase 28 family.

The enzyme catalyses a sterol + UDP-alpha-D-glucose = a sterol 3-beta-D-glucoside + UDP + H(+). In terms of biological role, involved in the biosynthesis of sterol glucoside. Can use different sterols such as cholesterol, sitosterol, and ergosterol as sugar acceptors. The sequence is that of UDP-sugar-dependent glycosyltransferase 52 (ugt52) from Dictyostelium discoideum (Social amoeba).